Consider the following 256-residue polypeptide: uncharacterized protein (256 aa).

The disordered stretch occupies residues 1-23 (MIPPCENAPHIIYHESQRGTRDR). Residues 12–23 (IYHESQRGTRDR) are compositionally biased toward basic and acidic residues.

This is an uncharacterized protein from Homo sapiens (Human).